The sequence spans 344 residues: Anthranilate phosphoribosyltransferase (344 aa).

5-phospho-alpha-D-ribose 1-diphosphate-binding positions include G81, 84 to 85 (GD), S89, 91 to 94 (NIST), 109 to 117 (KHGNRALSS), and A121. G81 is a binding site for anthranilate. S93 provides a ligand contact to Mg(2+). N112 provides a ligand contact to anthranilate. R167 serves as a coordination point for anthranilate. D226 and E227 together coordinate Mg(2+).

Belongs to the anthranilate phosphoribosyltransferase family. In terms of assembly, homodimer. Mg(2+) serves as cofactor.

It carries out the reaction N-(5-phospho-beta-D-ribosyl)anthranilate + diphosphate = 5-phospho-alpha-D-ribose 1-diphosphate + anthranilate. The protein operates within amino-acid biosynthesis; L-tryptophan biosynthesis; L-tryptophan from chorismate: step 2/5. Its function is as follows. Catalyzes the transfer of the phosphoribosyl group of 5-phosphorylribose-1-pyrophosphate (PRPP) to anthranilate to yield N-(5'-phosphoribosyl)-anthranilate (PRA). The sequence is that of Anthranilate phosphoribosyltransferase from Azorhizobium caulinodans (strain ATCC 43989 / DSM 5975 / JCM 20966 / LMG 6465 / NBRC 14845 / NCIMB 13405 / ORS 571).